The following is a 484-amino-acid chain: Auxin transporter-like protein 2 (484 aa).

Residues 1–59 (MLPQKQGEEAIVSSFNETDQQEGVVGREEEVEDHSFSVKNFLWHGGSVWDAWFSCASNQ) lie on the Cytoplasmic side of the membrane. Residues 60–77 (VAQVLLTLPYSFSQLGML) form a helical membrane-spanning segment. At 78–79 (SG) the chain is on the extracellular side. The chain crosses the membrane as a helical span at residues 80–100 (ILLQVFYGILGSWTAYLISVL). Residues 101-135 (YVEYRSRKEKENVNFKNHVIQWFEVLDGLLGPYWK) are Cytoplasmic-facing. A helical membrane pass occupies residues 136-156 (ALGLAFNCTFLLFGSVIQLIA). Residues 157–172 (CASNIYYINDNLDKRT) are Extracellular-facing. Residues 173 to 193 (WTYIFGACCATTVFIPSFHNY) traverse the membrane as a helical segment. Residues 194-196 (RIW) are Cytoplasmic-facing. The helical transmembrane segment at 197-217 (SFLGLGMTTYTAWYLTIASIV) threads the bilayer. The Extracellular segment spans residues 218–232 (HGQAENVTHTGPKKL). The N-linked (GlcNAc...) asparagine glycan is linked to Asn223. Residues 233-253 (VLYFTGATNILYTFGGHAVTV) traverse the membrane as a helical segment. At 254 to 266 (EIMHAMWKPQKFK) the chain is on the cytoplasmic side. Residues 267 to 287 (YIYLMATLYVFTLTIPSATAV) traverse the membrane as a helical segment. Topologically, residues 288 to 314 (YWAFGDELLNHSNAFSLLPKNGWRDGA) are extracellular. Asn297 carries an N-linked (GlcNAc...) asparagine glycan. The helical transmembrane segment at 315 to 335 (VILMLIHQFITFGFACTPLYF) threads the bilayer. Topologically, residues 336 to 356 (VWEKVIGMHDTRSICLRALAR) are cytoplasmic. Residues 357-377 (LPVVIPIWFLAIIFPFFGPIN) traverse the membrane as a helical segment. Position 378 (Ser378) is a topological domain, extracellular. Residues 379–399 (AVGALLVSFTVYIIPSAAHML) form a helical membrane-spanning segment. Over 400–425 (TYRKASARKNAAEKPPFFMPSWTAMY) the chain is Cytoplasmic. Residues 426 to 446 (IFNAFIVIWVLVVGFGFGGWA) traverse the membrane as a helical segment. Over 447–484 (SMTNFIRQIDTFGLFAKCYQCKPPPVMAAAPPPHALHH) the chain is Extracellular.

This sequence belongs to the amino acid/polyamine transporter 2 family. Amino acid/auxin permease (AAAP) (TC 2.A.18.1) subfamily. In terms of tissue distribution, shoots and roots of nodulating plants. Higher levels in roots, flowers and stems, lower in nodules, leaves, petioles and shoot apices.

Its subcellular location is the cell membrane. Carrier protein involved in proton-driven auxin influx. Mediates the formation of auxin gradient from developing leaves (site of auxin biosynthesis) to tips by contributing to the loading of auxin in vascular tissues and facilitating acropetal (base to tip) auxin transport within inner tissues of the root apex, and basipetal (tip to base) auxin transport within outer tissues of the root apex. May be involved in lateral roots and nodules formation. This chain is Auxin transporter-like protein 2 (LAX2), found in Medicago truncatula (Barrel medic).